We begin with the raw amino-acid sequence, 478 residues long: Subtilisin-like protease 3 (478 aa).

A signal peptide spans 1–17 (MKFSTILPILWANCCLC). The Inhibitor I9 domain maps to 70–167 (RYVIVFNEDI…FVEQETTVKI (98 aa)). Residues 177–478 (PWGLHRVSHR…GGGKKLDGFW (302 aa)) enclose the Peptidase S8 domain. Catalysis depends on charge relay system residues aspartate 213, histidine 245, and serine 407.

Belongs to the peptidase S8 family.

Serine protease with unknown substrate. The chain is Subtilisin-like protease 3 (YSP3) from Saccharomyces cerevisiae (strain ATCC 204508 / S288c) (Baker's yeast).